A 529-amino-acid polypeptide reads, in one-letter code: MEAYVLSLSDVLFNILFIGVCILSVLLLISHALKYIIGDSKEKKLFNQRLEQIKNQQPLEPTKYQDIQTICKTLKESYSTNALRHLDARKEVLYCLYRMVLDNKQAISNAIREDLHRDVGMCVAEVNSVIHEINFLRKNLNKYLKRKQVPTVCAQLFGKSFVEREPYGCVCVISPWNFPANLSLIPCAGALACGNTVFLKMSKYSMATSKLIAELCDKYIPSEYLRCEYLTGREAIQECCSASFDYYFFTGSTYVGKLINQAAAEKMVPATLELGGKNPAIVDKSVNLKVAAKRIAWAKSINAGQICVCVDHVFVPRSIKNEFCEAVKNSFIKFFGEDQKKSEDFGRIITKSAAKKMKEIIDQSDVYYGGEVDIENKYVQPTILQNVKIDDLCMKEEIFGPILPVIEYDTLDEVFEMVKQHPNPLACYVFTEDNDMFEHVIANINSGAIYNNDSIVHLLNPNLPFGGNCQSGIGCYHGKYTFDTFSRPRAVCNGHTSFDLSLKDWPFTSFQSWAVDRMAASEIPVVSYL.

Residue 251–256 (GSTYVG) participates in NAD(+) binding. Catalysis depends on residues Glu273 and Cys307.

The protein belongs to the aldehyde dehydrogenase family.

The catalysed reaction is an aldehyde + NAD(+) + H2O = a carboxylate + NADH + 2 H(+). This Entamoeba histolytica (strain ATCC 30459 / HM-1:IMSS / ABRM) protein is Aldehyde dehydrogenase 1.